The sequence spans 487 residues: Cysteine--tRNA ligase (487 aa).

Cys-27 provides a ligand contact to Zn(2+). The 'HIGH' region signature appears at Val-29–His-39. The Zn(2+) site is built by Cys-211, His-236, and Glu-240. Positions Lys-268–Ser-272 match the 'KMSKS' region motif. Residue Lys-271 coordinates ATP.

The protein belongs to the class-I aminoacyl-tRNA synthetase family. As to quaternary structure, monomer. The cofactor is Zn(2+).

The protein localises to the cytoplasm. The enzyme catalyses tRNA(Cys) + L-cysteine + ATP = L-cysteinyl-tRNA(Cys) + AMP + diphosphate. This Thermodesulfovibrio yellowstonii (strain ATCC 51303 / DSM 11347 / YP87) protein is Cysteine--tRNA ligase.